The primary structure comprises 319 residues: Ribonuclease Z (319 aa).

Residues His62, His64, Asp66, His67, His139, Asp210, and His268 each contribute to the Zn(2+) site. Catalysis depends on Asp66, which acts as the Proton acceptor.

This sequence belongs to the RNase Z family. Homodimer. Requires Zn(2+) as cofactor.

The enzyme catalyses Endonucleolytic cleavage of RNA, removing extra 3' nucleotides from tRNA precursor, generating 3' termini of tRNAs. A 3'-hydroxy group is left at the tRNA terminus and a 5'-phosphoryl group is left at the trailer molecule.. Functionally, zinc phosphodiesterase, which displays some tRNA 3'-processing endonuclease activity. Probably involved in tRNA maturation, by removing a 3'-trailer from precursor tRNA. The sequence is that of Ribonuclease Z from Nostoc punctiforme (strain ATCC 29133 / PCC 73102).